The primary structure comprises 185 residues: Putative manganese efflux pump MntP (185 aa).

The next 6 membrane-spanning stretches (helical) occupy residues 4–24, 36–56, 65–85, 105–125, 130–150, and 165–185; these read LTSS…ALAI, ALVI…AGWI, ISSY…IKMI, VILL…SFGV, VLMP…AGVF, and IFGG…ILPL.

The protein belongs to the MntP (TC 9.B.29) family.

It localises to the cell membrane. Probably functions as a manganese efflux pump. In Methanoregula boonei (strain DSM 21154 / JCM 14090 / 6A8), this protein is Putative manganese efflux pump MntP.